A 216-amino-acid chain; its full sequence is Glycerol-3-phosphate acyltransferase 3 (216 aa).

The next 5 membrane-spanning stretches (helical) occupy residues 6–26 (LLLV…YLVS), 58–78 (LVAS…GLVI), 92–112 (LLFA…WPVF), 125–145 (FGGM…VLII), and 158–178 (ITGV…SGFP).

The protein belongs to the PlsY family. Probably interacts with PlsX.

It is found in the cell membrane. It carries out the reaction an acyl phosphate + sn-glycerol 3-phosphate = a 1-acyl-sn-glycero-3-phosphate + phosphate. It functions in the pathway lipid metabolism; phospholipid metabolism. Its function is as follows. Catalyzes the transfer of an acyl group from acyl-phosphate (acyl-PO(4)) to glycerol-3-phosphate (G3P) to form lysophosphatidic acid (LPA). This enzyme utilizes acyl-phosphate as fatty acyl donor, but not acyl-CoA or acyl-ACP. This is Glycerol-3-phosphate acyltransferase 3 from Dehalococcoides mccartyi (strain CBDB1).